Here is a 449-residue protein sequence, read N- to C-terminus: UDP-N-acetylmuramoylalanine--D-glutamate ligase (449 aa).

Residue 118–124 participates in ATP binding; the sequence is GTNGKTT.

The protein belongs to the MurCDEF family.

The protein localises to the cytoplasm. The enzyme catalyses UDP-N-acetyl-alpha-D-muramoyl-L-alanine + D-glutamate + ATP = UDP-N-acetyl-alpha-D-muramoyl-L-alanyl-D-glutamate + ADP + phosphate + H(+). It functions in the pathway cell wall biogenesis; peptidoglycan biosynthesis. Cell wall formation. Catalyzes the addition of glutamate to the nucleotide precursor UDP-N-acetylmuramoyl-L-alanine (UMA). The chain is UDP-N-acetylmuramoylalanine--D-glutamate ligase from Staphylococcus aureus (strain Mu3 / ATCC 700698).